The following is a 67-amino-acid chain: Conotoxin Cl6.7 (67 aa).

The N-terminal stretch at methionine 1–threonine 24 is a signal peptide. The propeptide occupies threonine 25–serine 39. Intrachain disulfides connect cysteine 43–cysteine 58, cysteine 50–cysteine 62, and cysteine 57–cysteine 66.

It belongs to the conotoxin O1 superfamily. Expressed by the venom duct.

It localises to the secreted. This chain is Conotoxin Cl6.7, found in Californiconus californicus (California cone).